The primary structure comprises 328 residues: MDAQNKEVDALVQKITGLHAAIAKLPSLSPSPDVDALFTDLVTACVPPSPVDVTKLGSEAQEMREGLIRLCSEAEGKLEAHYSDMLAAFDNPLDHLGMFPYYSNYINLSKLEYELLARYVPGGIARPAVAFIGSGPLPFSSYVLAARHLPDAMFDNYDLCSAANDRASKLFRADKDVGARMSFHTADVADLTRELAAYDVVFLAALVGMAAEDKAKVIPHLGAHMADGAALVVRSAQARGFLYPIVDPQDIGRGGFEVLAVCHPDDDVVNSVIIAHKSKDVHANERPNGRGGQYRGAVPVVSPPCRFGEMVADVTHKREEFTNAEVAF.

This sequence belongs to the nicotianamine synthase (NAS)-like family.

The catalysed reaction is 3 S-adenosyl-L-methionine = nicotianamine + 3 S-methyl-5'-thioadenosine + 3 H(+). Functionally, synthesizes nicotianamine, a polyamine that is the first intermediate in the synthesis of the phytosiderophores of the mugineic acid type found in gramineae which serves as a sensor for the physiological iron status within the plant, and/or might be involved in the transport of iron. The protein is Probable nicotianamine synthase 6 (NAS6) of Hordeum vulgare (Barley).